We begin with the raw amino-acid sequence, 239 residues long: Chlorate reductase subunit gamma (239 aa).

Residues 1-27 (MKTNILVKRMAVIGLAVAAACTGAAAA) form the signal peptide. Heme b is bound by residues H74 and M138.

Heterotrimer of alpha, beta and gamma subunits. It depends on heme b as a cofactor.

It is found in the periplasm. In terms of biological role, may transfer electrons to the iron-sulfur centers of ClrB. This is Chlorate reductase subunit gamma (clrC) from Ideonella dechloratans.